The primary structure comprises 195 residues: Glucagon family neuropeptides (195 aa).

An N-terminal signal peptide occupies residues 1-20 (MAKSSRATLALLIYGILMRY). Residues 21–82 (SQCTPIGMGF…YYPPERRAET (62 aa)) constitute a propeptide that is removed on maturation. Positions 113 to 132 (VGEEEEDEEDSEPLSKRHSD) are disordered. Residues 115-124 (EEEEDEEDSE) show a composition bias toward acidic residues. Lysine amide is present on K167. Positions 171–195 (LVVPSVWTGIRDTVIITPEKRGKRY) are excised as a propeptide.

This sequence belongs to the glucagon family. Brain, testis, ovary and stomach. Not pancreas, pituitary, muscle and liver.

Its subcellular location is the secreted. Its function is as follows. Primary role of GHRH is to release GH from the pituitary. PACAP plays pivotal roles as a neurotransmitter and/or a neuromodulator. The polypeptide is Glucagon family neuropeptides (Clarias macrocephalus (Bighead catfish)).